A 384-amino-acid chain; its full sequence is Multidrug/solvent efflux pump periplasmic linker protein MepA (384 aa).

A signal peptide spans 1–22; that stretch reads MQFKPAVTALVSAVALATLLSG. A lipid anchor (N-palmitoyl cysteine) is attached at C23. C23 carries the S-diacylglycerol cysteine lipid modification. Residues 115–155 adopt a coiled-coil conformation; that stretch reads LAERYKQLIDEQAVSKQEYDDANAKRLQAEASLKSAQIDLR. The interval 362–384 is disordered; the sequence is ATNVKKPAGPDQANAAKADAKAE. A compositionally biased stretch (low complexity) spans 368–378; it reads PAGPDQANAAK.

It belongs to the membrane fusion protein (MFP) (TC 8.A.1) family.

It localises to the cell inner membrane. The periplasmic linker protein component of an organic solvent and antibiotic efflux pump; confers resistance to toluene, hexane, p-xylene, ampicillin, penicillin G, erythromycin, novobiocin and tetracycline. The sequence is that of Multidrug/solvent efflux pump periplasmic linker protein MepA (mepA) from Pseudomonas putida (Arthrobacter siderocapsulatus).